The chain runs to 319 residues: Glutathione synthetase (319 aa).

Residues 125–311 form the ATP-grasp domain; that stretch reads KLFTAWFPEL…ITGMLMDAIE (187 aa). 151–207 lines the ATP pocket; it reads HQEHGDIILKPLDGMGGTSIFRVKQDDPNLSVIIETLTELSSRFCMAQNFLPAIKEG. Residues Glu-281 and Asn-283 each coordinate Mg(2+).

This sequence belongs to the prokaryotic GSH synthase family. The cofactor is Mg(2+). Requires Mn(2+) as cofactor.

The enzyme catalyses gamma-L-glutamyl-L-cysteine + glycine + ATP = glutathione + ADP + phosphate + H(+). The protein operates within sulfur metabolism; glutathione biosynthesis; glutathione from L-cysteine and L-glutamate: step 2/2. The protein is Glutathione synthetase of Yersinia pestis.